We begin with the raw amino-acid sequence, 1088 residues long: Methionine S-methyltransferase (1088 aa).

It belongs to the class I-like SAM-binding methyltransferase superfamily. As to quaternary structure, homotetramer. As to expression, expressed in the shoot, scutellum, and aleurone cells but not in the root or endosperm.

The protein localises to the cytoplasm. The catalysed reaction is L-methionine + S-adenosyl-L-methionine = S-methyl-L-methionine + S-adenosyl-L-homocysteine. Functionally, catalyzes the S-methylmethionine (SMM) biosynthesis from adenosyl-L-homocysteine (AdoMet) and methionine. SMM biosynthesis (by MMT1) and degradation (by HMT-1, HMT-2 and HMT-3) constitute the SMM cycle in plants, which is probably required to achieve short term control of AdoMet level. Also able to catalyze the selenium-methylmethionine (SeMM) from AdoMet and selenium-methionine (SeMet). May play a role in phoem sulfur transport; such function is however not essential. The protein is Methionine S-methyltransferase (MMT1) of Hordeum vulgare (Barley).